Here is a 169-residue protein sequence, read N- to C-terminus: Cell division protein B3 (169 aa).

Its function is as follows. Part of a cell division machinery. May fulfill a coordination function between the Cdv proteins during cell division. In Sulfolobus acidocaldarius (strain ATCC 33909 / DSM 639 / JCM 8929 / NBRC 15157 / NCIMB 11770), this protein is Cell division protein B3.